The chain runs to 561 residues: Carbohydrate sulfotransferase 15 (561 aa).

At 1 to 80 (MRHCINCCIQ…FLRFKKGKRC (80 aa)) the chain is on the cytoplasmic side. The chain crosses the membrane as a helical; Signal-anchor for type II membrane protein span at residues 81–101 (SLVFGLIIMTLVMASYILSGA). The Lumenal portion of the chain corresponds to 102 to 561 (HQELLISSPF…ADEAFAWKTT (460 aa)). 263–267 (KCGTT) serves as a coordination point for 3'-phosphoadenylyl sulfate. An N-linked (GlcNAc...) asparagine glycan is attached at Asn364. Residues Arg392 and Ser400 each contribute to the 3'-phosphoadenylyl sulfate site.

The protein belongs to the sulfotransferase 1 family. As to quaternary structure, homodimer; disulfide-linked (Potential). The relevance of homodimerization is however unsure. May interact with phosphorylated proteins in resting B-cells, including HCK. Requires a divalent metal cation as cofactor. Glutathione serves as cofactor. Post-translationally, glycosylated. As to expression, expressed in B-cell-enriched tissues but not in fetal or adult thymus. Expressed in fetal and adult spleen, lymph node, tonsil, bone marrow and peripheral leukocytes. Not expressed in T-cells. In pro-B, pre-B, and mature B-cell lines, it colocalizes with RAG1.

It localises to the golgi apparatus membrane. It carries out the reaction dermatan 4'-sulfate + n 3'-phosphoadenylyl sulfate = dermatan 4',6'-bissulfate + n adenosine 3',5'-bisphosphate + n H(+). The enzyme catalyses chondroitin 4'-sulfate + n 3'-phosphoadenylyl sulfate = chondroitin 4',6'-bissulfate + n adenosine 3',5'-bisphosphate + n H(+). With respect to regulation, inhibited by phenyl beta-GalNAc(4,6-SO(4)). Its function is as follows. Sulfotransferase that transfers sulfate from 3'-phosphoadenosine 5'-phosphosulfate (PAPS) to the C-6 hydroxyl group of the GalNAc 4-sulfate residue of chondroitin sulfate A and forms chondroitin sulfate E containing GlcA-GalNAc(4,6-SO(4)) repeating units. It also transfers sulfate to a unique non-reducing terminal sequence, GalNAc(4SO4)-GlcA(2SO4)-GalNAc(6SO4), to yield a highly sulfated structure similar to the structure found in thrombomodulin chondroitin sulfate. May also act as a B-cell receptor involved in BCR ligation-mediated early activation that mediate regulatory signals key to B-cell development and/or regulation of B-cell-specific RAG expression; however such results are unclear in vivo. The protein is Carbohydrate sulfotransferase 15 (CHST15) of Homo sapiens (Human).